Consider the following 323-residue polypeptide: Aspartate carbamoyltransferase catalytic subunit (323 aa).

Carbamoyl phosphate contacts are provided by Arg68 and Thr69. Residue Lys96 participates in L-aspartate binding. 3 residues coordinate carbamoyl phosphate: Arg118, His148, and Gln151. L-aspartate is bound by residues Arg181 and Arg236. Residues Gly277 and Pro278 each contribute to the carbamoyl phosphate site.

This sequence belongs to the aspartate/ornithine carbamoyltransferase superfamily. ATCase family. As to quaternary structure, heterododecamer (2C3:3R2) of six catalytic PyrB chains organized as two trimers (C3), and six regulatory PyrI chains organized as three dimers (R2).

It catalyses the reaction carbamoyl phosphate + L-aspartate = N-carbamoyl-L-aspartate + phosphate + H(+). It functions in the pathway pyrimidine metabolism; UMP biosynthesis via de novo pathway; (S)-dihydroorotate from bicarbonate: step 2/3. Functionally, catalyzes the condensation of carbamoyl phosphate and aspartate to form carbamoyl aspartate and inorganic phosphate, the committed step in the de novo pyrimidine nucleotide biosynthesis pathway. In Verminephrobacter eiseniae (strain EF01-2), this protein is Aspartate carbamoyltransferase catalytic subunit.